A 443-amino-acid chain; its full sequence is MREIVHIQGGQCGNQIGAKFWEVVSDEHGIDPTGTALGDSDLQLERINVYFNEATGSRYVPRAILMDLEPGTMDSVRSGPYGQIFRPDNFVFGQTGAGNNWAKGHYTEGAELIDSVLDVVRKEAESCDCLQGFQVCHSLGGGTGSGMGTLLISKIREEYPDRMMLTFSVVPSPKVSDTVVEPYNATLSVHQLVENADECMVLDNEALYDICFRTLKLTTPTFGDLNHLISAVMSGITCCLRFPGQLNADLRKLAVNLIPFPRLHFFMVGFTPLTSRGSQQYRALTVPELTQQMWDAKNMMCAADPRHGRYLTASALFRGRMSTKEVDEQMLNVQNKNSSYFVEWIPNNVKSSVCDIPPKGLKMSATFIGNSTAIQEMFKRVSEQFTAMFRRKAFLHWYTGEGMDEMEFTEAESNMNDLVSEYQQYQDASAEEEGEFGEEEEEN.

GTP-binding residues include glutamine 11, glutamate 69, serine 138, glycine 142, threonine 143, glycine 144, asparagine 204, and asparagine 226. Glutamate 69 contributes to the Mg(2+) binding site. The tract at residues glutamate 421–asparagine 443 is disordered. Acidic residues predominate over residues serine 429–asparagine 443.

The protein belongs to the tubulin family. Dimer of alpha and beta chains. A typical microtubule is a hollow water-filled tube with an outer diameter of 25 nm and an inner diameter of 15 nM. Alpha-beta heterodimers associate head-to-tail to form protofilaments running lengthwise along the microtubule wall with the beta-tubulin subunit facing the microtubule plus end conferring a structural polarity. Microtubules usually have 13 protofilaments but different protofilament numbers can be found in some organisms and specialized cells. Requires Mg(2+) as cofactor.

The protein localises to the cytoplasm. It is found in the cytoskeleton. Tubulin is the major constituent of microtubules, a cylinder consisting of laterally associated linear protofilaments composed of alpha- and beta-tubulin heterodimers. Microtubules grow by the addition of GTP-tubulin dimers to the microtubule end, where a stabilizing cap forms. Below the cap, tubulin dimers are in GDP-bound state, owing to GTPase activity of alpha-tubulin. This Polytomella agilis (Quadriflagellate alga) protein is Tubulin beta chain (TUBB1).